A 142-amino-acid chain; its full sequence is Prefoldin subunit alpha 1 (142 aa).

It belongs to the prefoldin subunit alpha family. Heterohexamer of two alpha and four beta subunits.

The protein resides in the cytoplasm. In terms of biological role, molecular chaperone capable of stabilizing a range of proteins. Seems to fulfill an ATP-independent, HSP70-like function in archaeal de novo protein folding. The protein is Prefoldin subunit alpha 1 (pfdA1) of Methanocaldococcus jannaschii (strain ATCC 43067 / DSM 2661 / JAL-1 / JCM 10045 / NBRC 100440) (Methanococcus jannaschii).